Consider the following 98-residue polypeptide: NADH-ubiquinone oxidoreductase chain 4L (98 aa).

3 consecutive transmembrane segments (helical) span residues 1-21 (MSLTYMNMFMAFTISLLGLLL), 29-49 (SLLCLEGMMLSLFVMMTMTIL), and 61-81 (IILLVFAACEAALGLSLLVMV).

It belongs to the complex I subunit 4L family. In terms of assembly, core subunit of respiratory chain NADH dehydrogenase (Complex I) which is composed of 45 different subunits.

Its subcellular location is the mitochondrion inner membrane. The catalysed reaction is a ubiquinone + NADH + 5 H(+)(in) = a ubiquinol + NAD(+) + 4 H(+)(out). Its function is as follows. Core subunit of the mitochondrial membrane respiratory chain NADH dehydrogenase (Complex I) which catalyzes electron transfer from NADH through the respiratory chain, using ubiquinone as an electron acceptor. Part of the enzyme membrane arm which is embedded in the lipid bilayer and involved in proton translocation. The sequence is that of NADH-ubiquinone oxidoreductase chain 4L (MT-ND4L) from Vampyrodes caraccioli (Great stripe-faced bat).